Consider the following 367-residue polypeptide: Aldo-keto reductase AMT2 (367 aa).

An NADP(+)-binding site is contributed by aspartate 76. Catalysis depends on tyrosine 81, which acts as the Proton donor. Substrate is bound at residue histidine 173. Residues 203–204, glutamine 229, 258–268, and 330–338 contribute to the NADP(+) site; these read SS, GPLAAGKLARP, and SSVERMDEV. The tract at residues 346–367 is disordered; the sequence is LSDEEESRLEDPYKAQPPQGHS.

It belongs to the aldo/keto reductase family.

The protein operates within mycotoxin biosynthesis. In terms of biological role, aldo-keto reductase; part of the gene clusters that mediate the biosynthesis of AM-toxins, host-selective toxins (HSTs) causing Alternaria blotch on apple, a worldwide distributed disease. AM-toxins are cyclic depsipeptides containing the 3 residues 2-hydroxy-isovaleric acid (2-HIV), dehydroalanine, L-alanine which are common for all 3 AM-toxins I to III. The fourth precursor is L-alpha-amino-methoxyphenyl-valeric acid (L-Amv) for AM-toxin I, L-alpha-amino-phenyl-valeric acid (L-Apv) for AM-toxin II, and L-alpha-amino-hydroxyphenyl-valeric acid (L-Ahv) for AM-toxin III. AM-toxins have two target sites for affecting susceptible apple cells; they cause invagination of the plasma membrane and electrolyte loss and chloroplast disorganization. The non-ribosomal peptide synthetase AMT1 contains 4 catalytic modules and is responsible for activation of each residue in AM-toxin. The aldo-keto reductase AMT2 catalyzes the conversion of 2-keto-isovaleric acid (2-KIV) to 2-hydroxy-isovaleric acid (2-HIV), one of the precursor residues incorporated by AMT1 during AM-toxin biosynthesis, by reduction of its ketone to an alcohol. The cytochrome P450 monooxygenase AMT3 and the thioesterase AMT4 are also important for AM-toxin production, but their exact function within the AM-toxin biosynthesis are not known yet. Up to 21 proteins (including AMT1 to AMT4) are predicted to be involved in AM-toxin biosynthesis since their expression ishighly up-regulated in AM-toxin-producing cultures. The protein is Aldo-keto reductase AMT2 of Alternaria alternata (Alternaria rot fungus).